Reading from the N-terminus, the 255-residue chain is Putative cysteine-rich repeat secretory protein 10 (255 aa).

The signal sequence occupies residues 1–26; the sequence is MFSSSVSISILVVVAMQFSFIHNVLS. Gnk2-homologous domains lie at 33–134 and 140–252; these read YLQH…EIYT and FKHY…LYPF.

This sequence belongs to the cysteine-rich repeat secretory protein family.

The protein resides in the secreted. The polypeptide is Putative cysteine-rich repeat secretory protein 10 (CRRSP10) (Arabidopsis thaliana (Mouse-ear cress)).